Consider the following 208-residue polypeptide: Protein GrpE (208 aa).

The span at 1 to 12 (MTNKDESVEKNT) shows a compositional bias: basic and acidic residues. A disordered region spans residues 1–49 (MTNKDESVEKNTESTVEVTNVKQNIDDSVEQTEESKGHLQDEAIEETSD). Residues 13-23 (ESTVEVTNVKQ) are compositionally biased toward polar residues.

This sequence belongs to the GrpE family. As to quaternary structure, homodimer.

It is found in the cytoplasm. In terms of biological role, participates actively in the response to hyperosmotic and heat shock by preventing the aggregation of stress-denatured proteins, in association with DnaK and GrpE. It is the nucleotide exchange factor for DnaK and may function as a thermosensor. Unfolded proteins bind initially to DnaJ; upon interaction with the DnaJ-bound protein, DnaK hydrolyzes its bound ATP, resulting in the formation of a stable complex. GrpE releases ADP from DnaK; ATP binding to DnaK triggers the release of the substrate protein, thus completing the reaction cycle. Several rounds of ATP-dependent interactions between DnaJ, DnaK and GrpE are required for fully efficient folding. This is Protein GrpE from Staphylococcus aureus (strain bovine RF122 / ET3-1).